The following is a 266-amino-acid chain: Short-chain dehydrogenase/reductase tropE (266 aa).

Residues Leu18, Asp69, and Asn96 each contribute to the NADP(+) site. Ser147 functions as the Proton donor in the catalytic mechanism. NADP(+) contacts are provided by Tyr181, Lys185, and Thr216. Tyr181 acts as the Proton acceptor in catalysis. Lys185 acts as the Lowers pKa of active site Tyr in catalysis.

It belongs to the short-chain dehydrogenases/reductases (SDR) family.

Its pathway is secondary metabolite biosynthesis. In terms of biological role, short-chain dehydrogenase/reductase; part of the gene cluster that mediates the biosynthesis of the tropolone class of fungal maleic anhydrides. The pathway begins with the synthesis of 3-methylorcinaldehyde by the non-reducing polyketide synthase (PKS) tropA. 3-methylorcinaldehyde is the substrate for the FAD-dependent monooxygenase tropB to yield a dearomatized hydroxycyclohexadione. The 2-oxoglutarate-dependent dioxygenase tropC then performs the oxidative ring expansion to provide the first tropolone metabolite stipitaldehyde. Trop D converts stipitaldehyde into stipitacetal which is in turn converted to stipitalide by the short-chain dehydrogenase/reductase tropE. The next steps involve tropF, tropG, tropH, tropI and tropJ to form successive tropolone maleic anhydrides including stipitaldehydic, stipitatonic and stipitatic acids. The protein is Short-chain dehydrogenase/reductase tropE of Talaromyces stipitatus (strain ATCC 10500 / CBS 375.48 / QM 6759 / NRRL 1006) (Penicillium stipitatum).